We begin with the raw amino-acid sequence, 523 residues long: Probable malate:quinone oxidoreductase (523 aa).

This sequence belongs to the MQO family. It depends on FAD as a cofactor.

It carries out the reaction (S)-malate + a quinone = a quinol + oxaloacetate. The protein operates within carbohydrate metabolism; tricarboxylic acid cycle; oxaloacetate from (S)-malate (quinone route): step 1/1. This Agrobacterium fabrum (strain C58 / ATCC 33970) (Agrobacterium tumefaciens (strain C58)) protein is Probable malate:quinone oxidoreductase.